A 111-amino-acid chain; its full sequence is Nucleoid-associated protein VF_1686 (111 aa).

Disordered stretches follow at residues 1–23 and 89–111; these read MFGG…DRMQ and TQKE…KMPF.

Belongs to the YbaB/EbfC family. In terms of assembly, homodimer.

Its subcellular location is the cytoplasm. The protein localises to the nucleoid. Binds to DNA and alters its conformation. May be involved in regulation of gene expression, nucleoid organization and DNA protection. This chain is Nucleoid-associated protein VF_1686, found in Aliivibrio fischeri (strain ATCC 700601 / ES114) (Vibrio fischeri).